The primary structure comprises 296 residues: L-fucono-1,5-lactonase (296 aa).

Belongs to the metallo-dependent hydrolases superfamily. In terms of assembly, monomer. Requires Does not require a divalent metal for activity. The purified enzyme contains Zn(2+), but the addition of chelators does not diminish the catalytic activity of the enzyme, indicating that it does not require a divalent cation for substrate turnover. as cofactor.

The catalysed reaction is L-fucono-1,5-lactone + H2O = L-fuconate + H(+). It carries out the reaction L-fucono-1,4-lactone + H2O = L-fuconate + H(+). The enzyme catalyses D-arabinono-1,4-lactone + H2O = D-arabinonate + H(+). It catalyses the reaction L-xylono-1,4-lactone + H2O = L-xylonate + H(+). The catalysed reaction is L-galactono-1,4-lactone + H2O = L-galactonate + H(+). It participates in carbohydrate degradation; L-fucose degradation. L-fucono-1,5-lactonase involved in an L-fucose degradation pathway. Catalyzes the hydrolysis of L-fucono-1,5-lactone to L-fuconate. L-fucono-1,5-lactone is the best substrate, but the enzyme can also hydrolyze L-fucono-1,4-lactone, L-galactono-1,4-lactone D-arabinono-1,4-lactone and L-xylono-1,4-lactone. The polypeptide is L-fucono-1,5-lactonase (Burkholderia multivorans (strain ATCC 17616 / 249)).